The chain runs to 261 residues: L-erythrulose-1-phosphate isomerase (261 aa).

His99 serves as the catalytic Electrophile. Glu172 (proton acceptor) is an active-site residue.

This sequence belongs to the triosephosphate isomerase family.

The catalysed reaction is L-erythrulose 1-phosphate = D-erythrulose 4-phosphate. Its pathway is carbohydrate metabolism. Its function is as follows. Involved in catabolism of D-apiose. Catalyzes the isomerization of L-erythrulose 1-phosphate to D-erythrulose 4-phosphate. The protein is L-erythrulose-1-phosphate isomerase of Rhizobium rhizogenes (strain K84 / ATCC BAA-868) (Agrobacterium radiobacter).